A 432-amino-acid chain; its full sequence is Probable exopolygalacturonase X (432 aa).

An N-terminal signal peptide occupies residues 1–23 (MKFSYSFVQVVSLLLSLSPSVEG). Residues N113, N129, and N199 are each glycosylated (N-linked (GlcNAc...) asparagine). The stretch at 231-252 (SDNIVIQNSVINNGDDCVSFKP) is one PbH1 1 repeat. The active-site Proton donor is the D245. A disulfide bond links C247 and C264. N253 and N265 each carry an N-linked (GlcNAc...) asparagine glycan. PbH1 repeat units follow at residues 254–274 (STNI…SVGS), 285–306 (VQNV…RIKV), and 327–348 (VKNI…EVTQ). The active site involves H268. N-linked (GlcNAc...) asparagine glycans are attached at residues N292, N297, N329, N354, and N364. The PbH1 5 repeat unit spans residues 362–394 (PSNLTISDIHFKNFRGTTSGKRDPDVGTIVCSS). C392 and C398 are disulfide-bonded.

It belongs to the glycosyl hydrolase 28 family.

The protein resides in the secreted. It catalyses the reaction [(1-&gt;4)-alpha-D-galacturonosyl](n) + H2O = alpha-D-galacturonate + [(1-&gt;4)-alpha-D-galacturonosyl](n-1). Specific in hydrolyzing the terminal glycosidic bond of polygalacturonic acid and oligogalacturonates. The polypeptide is Probable exopolygalacturonase X (pgaX) (Neosartorya fischeri (strain ATCC 1020 / DSM 3700 / CBS 544.65 / FGSC A1164 / JCM 1740 / NRRL 181 / WB 181) (Aspergillus fischerianus)).